The following is a 258-amino-acid chain: Polysialic acid transport protein KpsM (258 aa).

Residues 1–30 (MARSGFEVQKVTVEALFLREIRTRFGKFRL) are Cytoplasmic-facing. Residues 30–251 (LGYLWAILEP…FIGLALYRTR (222 aa)) form the ABC transmembrane type-2 domain. A helical membrane pass occupies residues 31–54 (GYLWAILEPSAHLLILLGILGYVM). Residues 55–61 (HRTMPDI) are Periplasmic-facing. Residues 62 to 81 (SFPVFLLNGLIPFFIFSSIS) traverse the membrane as a helical segment. Over 82–108 (KRSIGAIEANQGLFNYRPVKPIDTIIA) the chain is Cytoplasmic. The chain crosses the membrane as a helical span at residues 109–132 (RALLETLIYVAVYILLMLIVWMTG). The Periplasmic segment spans residues 133 to 143 (EYFEITNFLQL). A helical membrane pass occupies residues 144-165 (VLTWSLLIILSCGVGLIFMVVG). Residues 166 to 174 (KTFPEMQKV) lie on the Cytoplasmic side of the membrane. Residues 175–195 (LPILLKPLYFISCIMFPLHSI) traverse the membrane as a helical segment. The Periplasmic segment spans residues 196 to 226 (PKQYWSYLLWNPLVHVVELSREAVMPGYISE). The chain crosses the membrane as a helical span at residues 227 to 247 (GVSLNYLAMFTLVTLFIGLAL). The Cytoplasmic segment spans residues 248–258 (YRTREEAMLTS).

This sequence belongs to the ABC-2 integral membrane protein family.

It is found in the cell inner membrane. Functionally, kpsM and KpsT constitute a system for the transport of polysialic acid across the cytoplasmic membrane. The protein is Polysialic acid transport protein KpsM (kpsM) of Escherichia coli.